The primary structure comprises 376 residues: Glucose-1-phosphate adenylyltransferase (376 aa).

Residues Tyr-101, Gly-166, 181–182 (EK), and Ser-192 each bind alpha-D-glucose 1-phosphate.

This sequence belongs to the bacterial/plant glucose-1-phosphate adenylyltransferase family. Homotetramer.

The enzyme catalyses alpha-D-glucose 1-phosphate + ATP + H(+) = ADP-alpha-D-glucose + diphosphate. Its pathway is glycan biosynthesis; glycogen biosynthesis. In terms of biological role, involved in the biosynthesis of ADP-glucose, a building block required for the elongation reactions to produce glycogen. Catalyzes the reaction between ATP and alpha-D-glucose 1-phosphate (G1P) to produce pyrophosphate and ADP-Glc. The chain is Glucose-1-phosphate adenylyltransferase from Bacillus cereus (strain ATCC 10987 / NRS 248).